Here is a 248-residue protein sequence, read N- to C-terminus: 2,3-bisphosphoglycerate-dependent phosphoglycerate mutase (248 aa).

Substrate is bound by residues 8 to 15 (RHGESEWN), 21 to 22 (TG), Arg-60, 87 to 90 (ERHY), Lys-98, 114 to 115 (RR), and 183 to 184 (GN). His-9 acts as the Tele-phosphohistidine intermediate in catalysis. The Proton donor/acceptor role is filled by Glu-87.

It belongs to the phosphoglycerate mutase family. BPG-dependent PGAM subfamily.

The enzyme catalyses (2R)-2-phosphoglycerate = (2R)-3-phosphoglycerate. Its pathway is carbohydrate degradation; glycolysis; pyruvate from D-glyceraldehyde 3-phosphate: step 3/5. Its function is as follows. Catalyzes the interconversion of 2-phosphoglycerate and 3-phosphoglycerate. The polypeptide is 2,3-bisphosphoglycerate-dependent phosphoglycerate mutase (Coprothermobacter proteolyticus (strain ATCC 35245 / DSM 5265 / OCM 4 / BT)).